We begin with the raw amino-acid sequence, 133 residues long: Small ribosomal subunit protein uS11 (133 aa).

This sequence belongs to the universal ribosomal protein uS11 family. In terms of assembly, part of the 30S ribosomal subunit.

Its function is as follows. Located on the platform of the 30S subunit. The sequence is that of Small ribosomal subunit protein uS11 from Aeropyrum pernix (strain ATCC 700893 / DSM 11879 / JCM 9820 / NBRC 100138 / K1).